A 171-amino-acid chain; its full sequence is Dual specificity protein phosphatase OPG106 (171 aa).

The interval 1 to 27 (MDKKSLYKYLLLRSTGDMHKAKSPTIM) is dimerization. Residues 23-171 (SPTIMTRVTN…IIEKYVIDKN (149 aa)) form the Tyrosine-protein phosphatase domain. Cysteine 110 (phosphocysteine intermediate) is an active-site residue.

Belongs to the protein-tyrosine phosphatase family. Non-receptor class dual specificity subfamily. In terms of assembly, homodimer.

It is found in the virion. It localises to the host cytoplasm. It catalyses the reaction O-phospho-L-tyrosyl-[protein] + H2O = L-tyrosyl-[protein] + phosphate. It carries out the reaction O-phospho-L-seryl-[protein] + H2O = L-seryl-[protein] + phosphate. Its function is as follows. Serine/tyrosine phosphatase which down-regulates cellular antiviral response by dephosphorylating activated host STAT1 and blocking interferon (IFN)-stimulated innate immune responses. Dephosphorylates the OPG144 protein. The chain is Dual specificity protein phosphatase OPG106 (OPG106) from Bos taurus (Bovine).